The primary structure comprises 912 residues: Protein translocase subunit SecA (912 aa).

Residues Q87, 105–109 (GEGKT), and D508 each bind ATP. A disordered region spans residues 865 to 912 (DEEAAQVQSGNAPVPVSQVTRDEPKVGRNDPCPCGSGKKYKHCHGQLS). Residues C896, C898, C907, and H908 each contribute to the Zn(2+) site. Over residues 902–912 (KKYKHCHGQLS) the composition is skewed to basic residues.

It belongs to the SecA family. Monomer and homodimer. Part of the essential Sec protein translocation apparatus which comprises SecA, SecYEG and auxiliary proteins SecDF-YajC and YidC. It depends on Zn(2+) as a cofactor.

The protein localises to the cell inner membrane. It localises to the cytoplasm. The catalysed reaction is ATP + H2O + cellular proteinSide 1 = ADP + phosphate + cellular proteinSide 2.. Part of the Sec protein translocase complex. Interacts with the SecYEG preprotein conducting channel. Has a central role in coupling the hydrolysis of ATP to the transfer of proteins into and across the cell membrane, serving both as a receptor for the preprotein-SecB complex and as an ATP-driven molecular motor driving the stepwise translocation of polypeptide chains across the membrane. The sequence is that of Protein translocase subunit SecA from Xanthomonas oryzae pv. oryzae (strain MAFF 311018).